The following is a 431-amino-acid chain: Histidinol dehydrogenase (431 aa).

Residues Tyr-127, Gln-189, and Asn-212 each contribute to the NAD(+) site. 3 residues coordinate substrate: Ser-237, Gln-259, and His-262. Gln-259 and His-262 together coordinate Zn(2+). Active-site proton acceptor residues include Glu-326 and His-327. The substrate site is built by His-327, Asp-360, Glu-414, and His-419. Asp-360 serves as a coordination point for Zn(2+). His-419 is a binding site for Zn(2+).

This sequence belongs to the histidinol dehydrogenase family. The cofactor is Zn(2+).

The catalysed reaction is L-histidinol + 2 NAD(+) + H2O = L-histidine + 2 NADH + 3 H(+). It participates in amino-acid biosynthesis; L-histidine biosynthesis; L-histidine from 5-phospho-alpha-D-ribose 1-diphosphate: step 9/9. In terms of biological role, catalyzes the sequential NAD-dependent oxidations of L-histidinol to L-histidinaldehyde and then to L-histidine. The sequence is that of Histidinol dehydrogenase from Xanthomonas oryzae pv. oryzae (strain KACC10331 / KXO85).